Here is a 396-residue protein sequence, read N- to C-terminus: Cytochrome c biogenesis protein Ccs1 (396 aa).

Transmembrane regions (helical) follow at residues 22-42 (LKFS…GTII), 79-99 (SNFY…CSLK), and 162-182 (AGPL…AIHA).

This sequence belongs to the Ccs1/CcsB family. In terms of assembly, may interact with CcsA.

The protein localises to the plastid. The protein resides in the chloroplast thylakoid membrane. Required during biogenesis of c-type cytochromes (cytochrome c6 and cytochrome f) at the step of heme attachment. This chain is Cytochrome c biogenesis protein Ccs1, found in Cyanidium caldarium (Red alga).